The primary structure comprises 507 residues: RNA-splicing ligase RtcB homolog (507 aa).

Positions 121, 124, 229, 261, and 355 each coordinate Mn(2+). 228–232 (NHYAE) provides a ligand contact to GMP. GMP contacts are provided by residues 355–356 (HN), 404–407 (GGTM), serine 411, 430–433 (HGAG), and lysine 506. Residue histidine 430 is the GMP-histidine intermediate of the active site.

Belongs to the RtcB family. In terms of assembly, catalytic component of the tRNA-splicing ligase complex. Requires Mn(2+) as cofactor.

It catalyses the reaction a 3'-end 3'-phospho-ribonucleotide-RNA + a 5'-end dephospho-ribonucleoside-RNA + GTP = a ribonucleotidyl-ribonucleotide-RNA + GMP + diphosphate. The catalysed reaction is a 3'-end 2',3'-cyclophospho-ribonucleotide-RNA + a 5'-end dephospho-ribonucleoside-RNA + GTP + H2O = a ribonucleotidyl-ribonucleotide-RNA + GMP + diphosphate + H(+). In terms of biological role, catalytic subunit of the tRNA-splicing ligase complex that acts by directly joining spliced tRNA halves to mature-sized tRNAs by incorporating the precursor-derived splice junction phosphate into the mature tRNA as a canonical 3',5'-phosphodiester. May act as an RNA ligase with broad substrate specificity, and may function toward other RNAs. The sequence is that of RNA-splicing ligase RtcB homolog from Branchiostoma floridae (Florida lancelet).